The primary structure comprises 240 residues: Sugar fermentation stimulation protein homolog (240 aa).

The protein belongs to the SfsA family.

The polypeptide is Sugar fermentation stimulation protein homolog (Pasteurella multocida (strain Pm70)).